The following is a 257-amino-acid chain: Phosphate import ATP-binding protein PstB (257 aa).

The region spanning 11-252 (IQVRNLNFYY…PAKKQTEDYI (242 aa)) is the ABC transporter domain. Residue 43 to 50 (GPSGCGKS) coordinates ATP.

It belongs to the ABC transporter superfamily. Phosphate importer (TC 3.A.1.7) family. As to quaternary structure, the complex is composed of two ATP-binding proteins (PstB), two transmembrane proteins (PstC and PstA) and a solute-binding protein (PstS).

It is found in the cell inner membrane. The catalysed reaction is phosphate(out) + ATP + H2O = ADP + 2 phosphate(in) + H(+). Part of the ABC transporter complex PstSACB involved in phosphate import. Responsible for energy coupling to the transport system. The protein is Phosphate import ATP-binding protein PstB of Escherichia coli O6:K15:H31 (strain 536 / UPEC).